A 219-amino-acid polypeptide reads, in one-letter code: Lipoprotein-releasing system ATP-binding protein LolD (219 aa).

The region spanning 5–219 is the ABC transporter domain; that stretch reads LKAGDIFKTY…KVVMQDGVII (215 aa). ATP is bound at residue 37–44; it reads GASGAGKS.

Belongs to the ABC transporter superfamily. Lipoprotein translocase (TC 3.A.1.125) family. In terms of assembly, the complex is composed of two ATP-binding proteins (LolD) and two transmembrane proteins (LolC and LolE).

Its subcellular location is the cell inner membrane. Functionally, part of the ABC transporter complex LolCDE involved in the translocation of mature outer membrane-directed lipoproteins, from the inner membrane to the periplasmic chaperone, LolA. Responsible for the formation of the LolA-lipoprotein complex in an ATP-dependent manner. In Cytophaga hutchinsonii (strain ATCC 33406 / DSM 1761 / CIP 103989 / NBRC 15051 / NCIMB 9469 / D465), this protein is Lipoprotein-releasing system ATP-binding protein LolD.